The following is a 107-amino-acid chain: Replication initiation control protein YabA (107 aa).

Zn(2+)-binding residues include H81, C83, C97, and C100.

Belongs to the YabA family. Homotetramer. Interacts with both DnaA and DnaN, acting as a bridge between these two proteins. Requires Zn(2+) as cofactor.

Its subcellular location is the cytoplasm. The protein resides in the nucleoid. Its function is as follows. Involved in control of chromosome replication initiation. Inhibits the cooperative binding of DnaA to the oriC region, thus negatively regulating initiation of chromosome replication. Inhibits the ability of DnaA-ATP to form a helix on DNA; does not disassemble preformed DnaA-DNA helices. Decreases the residence time of DnaA on the chromosome at its binding sites (oriC, replication forks and promoter-binding sites). Tethers DnaA to the replication machinery via the DNA polymerase beta sliding clamp subunit (dnaN). Associates with oriC and other DnaA targets on the chromosome in a DnaA-dependent manner. This chain is Replication initiation control protein YabA, found in Streptococcus pyogenes serotype M18 (strain MGAS8232).